We begin with the raw amino-acid sequence, 300 residues long: GTPase Era (300 aa).

The Era-type G domain maps to 8-176 (RCGYVAIVGR…EGLIAKHLPE (169 aa)). The G1 stretch occupies residues 16–23 (GRPNVGKS). Residue 16 to 23 (GRPNVGKS) coordinates GTP. A G2 region spans residues 42–46 (QTTRH). Positions 63 to 66 (DTPG) are G3. Residues 63 to 67 (DTPGM) and 125 to 128 (NKTD) contribute to the GTP site. The tract at residues 125 to 128 (NKTD) is G4. Residues 155-157 (VSA) are G5. One can recognise a KH type-2 domain in the interval 199–283 (VREKIMRQLG…MLNLWVKVKG (85 aa)).

Belongs to the TRAFAC class TrmE-Era-EngA-EngB-Septin-like GTPase superfamily. Era GTPase family. In terms of assembly, monomer.

The protein resides in the cytoplasm. It localises to the cell inner membrane. Functionally, an essential GTPase that binds both GDP and GTP, with rapid nucleotide exchange. Plays a role in 16S rRNA processing and 30S ribosomal subunit biogenesis and possibly also in cell cycle regulation and energy metabolism. In Pseudomonas fluorescens (strain ATCC BAA-477 / NRRL B-23932 / Pf-5), this protein is GTPase Era.